The sequence spans 494 residues: UPF0371 protein SPH_0451 (494 aa).

The protein belongs to the UPF0371 family.

The protein is UPF0371 protein SPH_0451 of Streptococcus pneumoniae (strain Hungary19A-6).